The following is a 216-amino-acid chain: Major fimbrial subunit (216 aa).

A signal peptide spans 1–20; the sequence is MKKTLLGSLILLAFAGNVQA. Cysteine 41 and cysteine 81 are joined by a disulfide.

This sequence belongs to the fimbrial protein family.

The protein localises to the fimbrium. In terms of biological role, mediates adherence to oropharyngeal epithelial cells. Helps the airway colonization process. In Haemophilus influenzae, this protein is Major fimbrial subunit (hifA).